The sequence spans 427 residues: Glutamate-1-semialdehyde 2,1-aminomutase (427 aa).

N6-(pyridoxal phosphate)lysine is present on K265.

The protein belongs to the class-III pyridoxal-phosphate-dependent aminotransferase family. HemL subfamily. Homodimer. Pyridoxal 5'-phosphate serves as cofactor.

It localises to the cytoplasm. It carries out the reaction (S)-4-amino-5-oxopentanoate = 5-aminolevulinate. It participates in porphyrin-containing compound metabolism; protoporphyrin-IX biosynthesis; 5-aminolevulinate from L-glutamyl-tRNA(Glu): step 2/2. In Burkholderia orbicola (strain MC0-3), this protein is Glutamate-1-semialdehyde 2,1-aminomutase.